The primary structure comprises 339 residues: Nitrilase (339 aa).

Residues 7–277 (YRVAAVQASP…EGITYADIDL (271 aa)) form the CN hydrolase domain. Catalysis depends on glutamate 47, which acts as the Proton acceptor. Lysine 128 (proton donor) is an active-site residue. Cysteine 162 serves as the catalytic Nucleophile.

Belongs to the carbon-nitrogen hydrolase superfamily. Nitrilase family.

It carries out the reaction a nitrile + 2 H2O = a carboxylate + NH4(+). This Bacillus sp. (strain OxB-1) protein is Nitrilase (nit).